The primary structure comprises 461 residues: L-cystine uptake protein TcyP (461 aa).

The next 10 membrane-spanning stretches (helical) occupy residues 1 to 21 (MTLF…LLYM), 33 to 53 (VFTA…IYGS), 72 to 92 (YVKL…LGAF), 104 to 124 (ISGL…AVGI), 183 to 203 (PTST…YLGV), 224 to 244 (IIMR…LAIM), 262 to 282 (FVIA…LLIT), 337 to 357 (LSIG…IMIA), 369 to 389 (FLFT…GVGG), and 393 to 413 (FAAL…GLLI).

It belongs to the dicarboxylate/amino acid:cation symporter (DAACS) (TC 2.A.23) family.

Its subcellular location is the membrane. Its function is as follows. Mediates uptake of L-cystine, the oxidized form of L-cysteine. In Bacillus licheniformis (strain ATCC 14580 / DSM 13 / JCM 2505 / CCUG 7422 / NBRC 12200 / NCIMB 9375 / NCTC 10341 / NRRL NRS-1264 / Gibson 46), this protein is L-cystine uptake protein TcyP (tcyP).